The following is a 185-amino-acid chain: UPF0301 protein MS0260 (185 aa).

It belongs to the UPF0301 (AlgH) family.

The chain is UPF0301 protein MS0260 from Mannheimia succiniciproducens (strain KCTC 0769BP / MBEL55E).